The following is an 85-amino-acid chain: Large ribosomal subunit protein bL31B (85 aa).

The protein belongs to the bacterial ribosomal protein bL31 family. Type B subfamily. Part of the 50S ribosomal subunit.

This chain is Large ribosomal subunit protein bL31B, found in Pseudarthrobacter chlorophenolicus (strain ATCC 700700 / DSM 12829 / CIP 107037 / JCM 12360 / KCTC 9906 / NCIMB 13794 / A6) (Arthrobacter chlorophenolicus).